Reading from the N-terminus, the 129-residue chain is Small ribosomal subunit protein uS13m (129 aa).

A disordered region spans residues 92–129; the sequence is HQDGSPLRGQRTHTNARTARKQIRKGNERRLPKEQATD. Positions 116 to 129 are enriched in basic and acidic residues; that stretch reads KGNERRLPKEQATD.

Belongs to the universal ribosomal protein uS13 family. In terms of assembly, part of the small ribosomal subunit.

It is found in the mitochondrion. In terms of biological role, located at the top of the head of the small subunit, it contacts several helices of the 18S rRNA. This chain is Small ribosomal subunit protein uS13m (RPS13), found in Zea mays (Maize).